The following is a 54-amino-acid chain: Protein GndA (54 aa).

A helical membrane pass occupies residues 28 to 50 (LFVVIVSFQQRALTSSVPVFLAV).

Its subcellular location is the cell inner membrane. The chain is Protein GndA from Escherichia coli (strain K12).